The chain runs to 202 residues: Nascent polypeptide-associated complex subunit alpha (202 aa).

Residues 1 to 19 (MADPRVEELPDEEVPKTNV) are compositionally biased toward basic and acidic residues. Positions 1–42 (MADPRVEELPDEEVPKTNVEDAGSSSESEAGDEPTIPGGAAV) are disordered. The region spanning 46–111 (SRNEKKARKA…AKIEDLNATA (66 aa)) is the NAC-A/B domain. The span at 117 to 126 (QQLAEAAANE) shows a compositional bias: low complexity. The interval 117-165 (QQLAEAAANEHAGHDHEHDHGKGKAPEAEAKKEEEEDDGEEVDESGLEA) is disordered. The span at 127–149 (HAGHDHEHDHGKGKAPEAEAKKE) shows a compositional bias: basic and acidic residues. Residues 150–162 (EEEDDGEEVDESG) show a composition bias toward acidic residues. The 40-residue stretch at 163–202 (LEAKDIELVMAQANVSRKKAVKALRENDNDIVNSIMALSI) folds into the UBA domain.

Belongs to the NAC-alpha family. In terms of assembly, part of the nascent polypeptide-associated complex (NAC), consisting of egd2 and egd1. NAC associates with ribosomes via egd1.

It localises to the cytoplasm. The protein resides in the nucleus. Component of the nascent polypeptide-associated complex (NAC), a dynamic component of the ribosomal exit tunnel, protecting the emerging polypeptides from interaction with other cytoplasmic proteins to ensure appropriate nascent protein targeting. The NAC complex also promotes mitochondrial protein import by enhancing productive ribosome interactions with the outer mitochondrial membrane and blocks the inappropriate interaction of ribosomes translating non-secretory nascent polypeptides with translocation sites in the membrane of the endoplasmic reticulum. Egd2 may also be involved in transcription regulation. This chain is Nascent polypeptide-associated complex subunit alpha (egd2), found in Aspergillus niger (strain ATCC MYA-4892 / CBS 513.88 / FGSC A1513).